Consider the following 434-residue polypeptide: Serine hydroxymethyltransferase (434 aa).

Residues Leu-128 and 132–134 (GHL) each bind (6S)-5,6,7,8-tetrahydrofolate. Lys-237 carries the post-translational modification N6-(pyridoxal phosphate)lysine.

The protein belongs to the SHMT family. In terms of assembly, homodimer. The cofactor is pyridoxal 5'-phosphate.

Its subcellular location is the cytoplasm. It carries out the reaction (6R)-5,10-methylene-5,6,7,8-tetrahydrofolate + glycine + H2O = (6S)-5,6,7,8-tetrahydrofolate + L-serine. It functions in the pathway one-carbon metabolism; tetrahydrofolate interconversion. Its pathway is amino-acid biosynthesis; glycine biosynthesis; glycine from L-serine: step 1/1. Catalyzes the reversible interconversion of serine and glycine with tetrahydrofolate (THF) serving as the one-carbon carrier. This reaction serves as the major source of one-carbon groups required for the biosynthesis of purines, thymidylate, methionine, and other important biomolecules. Also exhibits THF-independent aldolase activity toward beta-hydroxyamino acids, producing glycine and aldehydes, via a retro-aldol mechanism. The polypeptide is Serine hydroxymethyltransferase (Corynebacterium glutamicum (strain R)).